Consider the following 119-residue polypeptide: MVLTNSKQPRKQRKALYNAPLHLRNSVMSAMLAKELKEKYAKNSLPVKKGDTVKVLRGNFKGIEGEVSKVDYAGYKIIVEGVVNKKQDGNETAYPIHPSNVMITKLDESDEKRFKNSSN.

The protein belongs to the universal ribosomal protein uL24 family. Part of the 50S ribosomal subunit.

Functionally, one of two assembly initiator proteins, it binds directly to the 5'-end of the 23S rRNA, where it nucleates assembly of the 50S subunit. In terms of biological role, located at the polypeptide exit tunnel on the outside of the subunit. This is Large ribosomal subunit protein uL24 from Methanococcus maripaludis (strain DSM 14266 / JCM 13030 / NBRC 101832 / S2 / LL).